The primary structure comprises 160 residues: SsrA-binding protein (160 aa).

The segment at lysine 131 to aspartate 160 is disordered.

This sequence belongs to the SmpB family.

It localises to the cytoplasm. In terms of biological role, required for rescue of stalled ribosomes mediated by trans-translation. Binds to transfer-messenger RNA (tmRNA), required for stable association of tmRNA with ribosomes. tmRNA and SmpB together mimic tRNA shape, replacing the anticodon stem-loop with SmpB. tmRNA is encoded by the ssrA gene; the 2 termini fold to resemble tRNA(Ala) and it encodes a 'tag peptide', a short internal open reading frame. During trans-translation Ala-aminoacylated tmRNA acts like a tRNA, entering the A-site of stalled ribosomes, displacing the stalled mRNA. The ribosome then switches to translate the ORF on the tmRNA; the nascent peptide is terminated with the 'tag peptide' encoded by the tmRNA and targeted for degradation. The ribosome is freed to recommence translation, which seems to be the essential function of trans-translation. This Pseudomonas syringae pv. syringae (strain B728a) protein is SsrA-binding protein.